A 174-amino-acid polypeptide reads, in one-letter code: Beta-lactoglobulin (174 aa).

Residues 1–18 form the signal peptide; sequence MKFLLLTVGLTSICAIQA. 2 disulfides stabilise this stretch: cysteine 79/cysteine 172 and cysteine 122/cysteine 134.

It belongs to the calycin superfamily. Lipocalin family. Monomer.

The protein resides in the secreted. Functionally, lactoglobulin is the primary component of whey, it binds retinol and is probably involved in the transport of that molecule. The sequence is that of Beta-lactoglobulin (LGB) from Trichosurus vulpecula (Brush-tailed possum).